The primary structure comprises 338 residues: MLLLTFTLPVVTLLLAHIIRSWFRLRHIPGPFWAKITDLWREHHYIKGDYGDRPMAPYFAIPSLLGMESAMDQIQQELEDQICRRVTIDVVLWMRLFSLESLHWIAFSNKLGYLSEGKDTDGILSILQSKFIGLAGQLCGWIHRTTLRFHFPKSCTGTAVAPSQRKASHRDLLAHFMDASQKNPETLEERGVLGATISTIFAGTDTTGTSLTFFMYYLIKHPAALARLQEELDSAVRSGNLSYPPKWVEVSTLKYLQAVFKETLRLHSTARMSLYRVVGPEGLDLCGERLPSGTNLGCFGYTAHRNEPIYGRDAALFRPERWIEASNDTLLSMERASL.

The N-terminal stretch at 1-16 (MLLLTFTLPVVTLLLA) is a signal peptide. Asn240 and Asn327 each carry an N-linked (GlcNAc...) asparagine glycan.

Belongs to the cytochrome P450 family. The cofactor is heme.

The protein operates within alkaloid biosynthesis; ergot alkaloid biosynthesis. Its function is as follows. Cytochrome P450 monooxygenase; part of the gene cluster that mediates the biosynthesis of fumiclavanine C, a fungal ergot alkaloid. DmaW catalyzes the first step of ergot alkaloid biosynthesis by condensing dimethylallyl diphosphate (DMAP) and tryptophan to form 4-dimethylallyl-L-tryptophan. The second step is catalyzed by the methyltransferase easF that methylates 4-dimethylallyl-L-tryptophan in the presence of S-adenosyl-L-methionine, resulting in the formation of 4-dimethylallyl-L-abrine. The catalase easC and the FAD-dependent oxidoreductase easE then transform 4-dimethylallyl-L-abrine to chanoclavine-I which is further oxidized by EasD in the presence of NAD(+), resulting in the formation of chanoclavine-I aldehyde. EasA reduces chanoclavine-I aldehyde to dihydrochanoclavine-I aldehyde that spontaneously dehydrates to form 6,8-dimethyl-6,7-didehydroergoline. EasG then catalyzes the reduction of 6,8-dimethyl-6,7-didehydroergoline to form festuclavine. Hydrolysis of festuclavine by easM then leads to the formation of fumigaclavine B which is in turn acetylated by easN to fumigaclavine A. Finally, easL catalyzes the conversion of fumigaclavine A into fumigaclavine C by attaching a dimethylallyl moiety to C-2 of the indole nucleus. The role of the cytochrome P450 monooxygenase easK within the cluster has not been identified yet. This is Cytochrome P450 monooxygenase easK from Aspergillus fumigatus (strain ATCC MYA-4609 / CBS 101355 / FGSC A1100 / Af293) (Neosartorya fumigata).